Consider the following 431-residue polypeptide: Adenylosuccinate synthetase (431 aa).

GTP-binding positions include 12–18 (GDEGKGK) and 40–42 (GHT). Residue aspartate 13 is the Proton acceptor of the active site. Mg(2+) contacts are provided by aspartate 13 and glycine 40. IMP is bound by residues 13-16 (DEGK), 38-41 (NAGH), threonine 128, arginine 142, glutamine 225, threonine 240, and arginine 304. Catalysis depends on histidine 41, which acts as the Proton donor. Position 300–306 (300–306 (TTTGRPR)) interacts with substrate. GTP contacts are provided by residues arginine 306, 332-334 (KLD), and 414-416 (GVG).

Belongs to the adenylosuccinate synthetase family. As to quaternary structure, homodimer. Mg(2+) serves as cofactor.

The protein resides in the cytoplasm. The catalysed reaction is IMP + L-aspartate + GTP = N(6)-(1,2-dicarboxyethyl)-AMP + GDP + phosphate + 2 H(+). It functions in the pathway purine metabolism; AMP biosynthesis via de novo pathway; AMP from IMP: step 1/2. Functionally, plays an important role in the de novo pathway of purine nucleotide biosynthesis. Catalyzes the first committed step in the biosynthesis of AMP from IMP. This is Adenylosuccinate synthetase from Thermomicrobium roseum (strain ATCC 27502 / DSM 5159 / P-2).